The primary structure comprises 190 residues: Adenylate kinase (190 aa).

Residue 12–17 (GSGKTT) coordinates ATP. Positions 34–63 (STGDLLREEVASGSEYGKTIDSFISKGNLV) are NMP. AMP contacts are provided by residues T35, R40, 61–63 (NLV), 88–91 (GYPR), and Q95. Positions 130 to 136 (GRARGAD) are LID. R131 contacts ATP. Residues R133 and R145 each contribute to the AMP site. R173 is an ATP binding site.

The protein belongs to the adenylate kinase family. In terms of assembly, monomer.

It localises to the cytoplasm. It catalyses the reaction AMP + ATP = 2 ADP. It functions in the pathway purine metabolism; AMP biosynthesis via salvage pathway; AMP from ADP: step 1/1. Its function is as follows. Catalyzes the reversible transfer of the terminal phosphate group between ATP and AMP. Plays an important role in cellular energy homeostasis and in adenine nucleotide metabolism. In Helicobacter hepaticus (strain ATCC 51449 / 3B1), this protein is Adenylate kinase.